The sequence spans 451 residues: ATP synthase subunit beta (451 aa).

143–150 (GGAGVGKT) contacts ATP.

The protein belongs to the ATPase alpha/beta chains family. In terms of assembly, F-type ATPases have 2 components, CF(1) - the catalytic core - and CF(0) - the membrane proton channel. CF(1) has five subunits: alpha(3), beta(3), gamma(1), delta(1), epsilon(1). CF(0) has three main subunits: a(1), b(2) and c(9-12). The alpha and beta chains form an alternating ring which encloses part of the gamma chain. CF(1) is attached to CF(0) by a central stalk formed by the gamma and epsilon chains, while a peripheral stalk is formed by the delta and b chains.

It localises to the cell membrane. It catalyses the reaction ATP + H2O + 4 H(+)(in) = ADP + phosphate + 5 H(+)(out). In terms of biological role, produces ATP from ADP in the presence of a proton gradient across the membrane. The catalytic sites are hosted primarily by the beta subunits. The polypeptide is ATP synthase subunit beta (Coprothermobacter proteolyticus (strain ATCC 35245 / DSM 5265 / OCM 4 / BT)).